We begin with the raw amino-acid sequence, 457 residues long: MTKKVYVKTFGCQMNEYDSDKMVDVLNAAEGLEKTDTPEDADIILFNTCSVREKAQEKVFSDLGRVRELKEAKPGLLIGVGGCVASQEGASIVSRAPYVDLVFGPQTLHRLPQMIDARRASGRAQVDITFPEIEKFDHLPPARVEGPSAFVSIMEGCSKYCSYCVVPYTRGDEVSRPLDDVLTEVAGLADQGVREVTLLGQNVNAYRGALSAGSADIADFATLIEYVADIPGIERIRYTTSHPKEFTQRLIDTYAKVPKLVSHLHLPVQHGSDRILMAMKRGYTVLEYKSVIRKLRAIRPDLSLSTDMIVGFPGETEDDFDKMMALVHEMSYDTSFSFIYSPRPGTPAANLHDDTPREVKLKRLQHLQATIEENVARISQSMVGKVERILVEGPSRKDPNELSGRTENNRVVNFPAPLASHPRLIGQMIDVKINHAYPHSLRGELLLVSDDASAATH.

The region spanning 3–120 (KKVYVKTFGC…LPQMIDARRA (118 aa)) is the MTTase N-terminal domain. Residues Cys12, Cys49, Cys83, Cys157, Cys161, and Cys164 each contribute to the [4Fe-4S] cluster site. The 235-residue stretch at 143 to 377 (RVEGPSAFVS…QATIEENVAR (235 aa)) folds into the Radical SAM core domain. One can recognise a TRAM domain in the interval 380–447 (QSMVGKVERI…PHSLRGELLL (68 aa)).

It belongs to the methylthiotransferase family. MiaB subfamily. Monomer. The cofactor is [4Fe-4S] cluster.

It is found in the cytoplasm. The catalysed reaction is N(6)-dimethylallyladenosine(37) in tRNA + (sulfur carrier)-SH + AH2 + 2 S-adenosyl-L-methionine = 2-methylsulfanyl-N(6)-dimethylallyladenosine(37) in tRNA + (sulfur carrier)-H + 5'-deoxyadenosine + L-methionine + A + S-adenosyl-L-homocysteine + 2 H(+). Its function is as follows. Catalyzes the methylthiolation of N6-(dimethylallyl)adenosine (i(6)A), leading to the formation of 2-methylthio-N6-(dimethylallyl)adenosine (ms(2)i(6)A) at position 37 in tRNAs that read codons beginning with uridine. This chain is tRNA-2-methylthio-N(6)-dimethylallyladenosine synthase, found in Burkholderia vietnamiensis (strain G4 / LMG 22486) (Burkholderia cepacia (strain R1808)).